A 1416-amino-acid polypeptide reads, in one-letter code: DNA-directed RNA polymerase subunit beta' (1416 aa).

4 residues coordinate Zn(2+): C71, C73, C86, and C89. The Mg(2+) site is built by D461, D463, and D465. Zn(2+)-binding residues include C815, C889, C896, and C899.

This sequence belongs to the RNA polymerase beta' chain family. In terms of assembly, the RNAP catalytic core consists of 2 alpha, 1 beta, 1 beta' and 1 omega subunit. When a sigma factor is associated with the core the holoenzyme is formed, which can initiate transcription. Mg(2+) serves as cofactor. The cofactor is Zn(2+).

The catalysed reaction is RNA(n) + a ribonucleoside 5'-triphosphate = RNA(n+1) + diphosphate. DNA-dependent RNA polymerase catalyzes the transcription of DNA into RNA using the four ribonucleoside triphosphates as substrates. The polypeptide is DNA-directed RNA polymerase subunit beta' (Haemophilus influenzae (strain PittEE)).